Here is a 399-residue protein sequence, read N- to C-terminus: Glutathione S-transferase LANCL1 (399 aa).

Ala2 carries the N-acetylalanine modification. Lys142 carries the post-translational modification N6-acetyllysine. Cys276 serves as a coordination point for Zn(2+). A glutathione-binding site is contributed by Lys317. Zn(2+)-binding residues include Cys322 and His323. 364 to 367 (RTPD) provides a ligand contact to glutathione.

This sequence belongs to the LanC-like protein family. Interacts with the C-terminal of STOM. Interacts with the EPS8 SH3 domain. Interaction with EPS8 is inhibited by glutathione binding. In terms of tissue distribution, expressed in brain.

It localises to the cytoplasm. It is found in the cell membrane. The enzyme catalyses RX + glutathione = an S-substituted glutathione + a halide anion + H(+). The catalysed reaction is 1-chloro-2,4-dinitrobenzene + glutathione = 2,4-dinitrophenyl-S-glutathione + chloride + H(+). Its function is as follows. Functions as a glutathione transferase. Catalyzes conjugation of the glutathione (GSH) to artificial substrates 1-chloro-2,4-dinitrobenzene (CDNB) and p-nitrophenyl acetate. Mitigates neuronal oxidative stress during normal postnatal development and in response to oxidative stresses probably through GSH antioxidant defense mechanism. May play a role in EPS8 signaling. Binds glutathione. This chain is Glutathione S-transferase LANCL1 (LANCL1), found in Bos taurus (Bovine).